Here is a 266-residue protein sequence, read N- to C-terminus: Zinc transporter ZupT (266 aa).

8 helical membrane passes run 8-28 (LLLT…ALVV), 35-55 (FLTL…FVEL), 70-90 (QAAA…IWAI), 123-143 (GLFT…AVFF), 152-172 (GIVI…AIAV), 185-205 (FTYS…GFAI), 209-229 (WLSP…MVYI), and 246-266 (LAIS…LLLA). Positions 134 and 137 each coordinate Fe(2+). Zn(2+) contacts are provided by glutamate 137 and histidine 162. Residues asparagine 163, glutamate 166, and glutamate 195 each coordinate Fe(2+). Glutamate 166 is a Zn(2+) binding site.

Belongs to the ZIP transporter (TC 2.A.5) family. ZupT subfamily.

It localises to the cell membrane. The enzyme catalyses Zn(2+)(in) = Zn(2+)(out). In terms of biological role, mediates zinc uptake. May also transport other divalent cations. This chain is Zinc transporter ZupT, found in Chlorobium phaeovibrioides (strain DSM 265 / 1930) (Prosthecochloris vibrioformis (strain DSM 265)).